Consider the following 826-residue polypeptide: U-box domain-containing protein 4 (826 aa).

Residues 172–204 (RSNQEILIEAVALERQKEMAEQSENNAEVEFLD) adopt a coiled-coil conformation. Residues 229–303 (AILADFFCPL…ANWCETNDVK (75 aa)) enclose the U-box domain. The disordered stretch occupies residues 330-501 (GADVSARKVS…TRRDLSDFSP (172 aa)). The span at 347–360 (ASSSETGKPSFSSR) shows a compositional bias: polar residues. Basic and acidic residues predominate over residues 391 to 414 (DARRGSLNDFEDRSNDSRELRTDA). A Phosphoserine modification is found at S396. Over residues 416 to 428 (GRSSVSSTTRGSV) the composition is skewed to low complexity. A compositionally biased stretch (basic and acidic residues) spans 492–501 (TRRDLSDFSP). ARM repeat units follow at residues 530–570 (NETR…LLAK), 573–612 (MDNR…NLSI), 614–653 (DNNK…SLSV), 655–694 (EENK…NLSI), 696–734 (QENK…NLAT), 736–775 (PEGR…QLST), and 778–817 (GRFC…YFRN).

The catalysed reaction is S-ubiquitinyl-[E2 ubiquitin-conjugating enzyme]-L-cysteine + [acceptor protein]-L-lysine = [E2 ubiquitin-conjugating enzyme]-L-cysteine + N(6)-ubiquitinyl-[acceptor protein]-L-lysine.. It functions in the pathway protein modification; protein ubiquitination. Functions as an E3 ubiquitin ligase. This is U-box domain-containing protein 4 (PUB4) from Arabidopsis thaliana (Mouse-ear cress).